Consider the following 583-residue polypeptide: Propane 2-monooxygenase operon transcriptional activator MimR (583 aa).

In terms of domain architecture, Sigma-54 factor interaction spans 320-513; it reads LAGRSSSFRR…LRHVLTETLR (194 aa). Residues 348-355 and 395-404 contribute to the ATP site; these read GEKGSGRT and DADFAVIVAD.

In terms of biological role, acts as a transcriptional activator of the mimABCD operon encoding the propane 2-monooxygenase complex. The protein is Propane 2-monooxygenase operon transcriptional activator MimR of Mycolicibacterium goodii (Mycobacterium goodii).